A 201-amino-acid chain; its full sequence is Pyridoxine/pyridoxamine 5'-phosphate oxidase (201 aa).

FMN is bound by residues 49–54 (RMVLLK), 64–65 (YT), K71, and Q93. K54 contacts substrate. Y111, R115, and S119 together coordinate substrate. Residues 128–129 (QS) and W172 contribute to the FMN site. A substrate-binding site is contributed by 178-180 (RLH). R182 lines the FMN pocket.

Belongs to the pyridoxamine 5'-phosphate oxidase family. In terms of assembly, homodimer. The cofactor is FMN.

The catalysed reaction is pyridoxamine 5'-phosphate + O2 + H2O = pyridoxal 5'-phosphate + H2O2 + NH4(+). It carries out the reaction pyridoxine 5'-phosphate + O2 = pyridoxal 5'-phosphate + H2O2. The protein operates within cofactor metabolism; pyridoxal 5'-phosphate salvage; pyridoxal 5'-phosphate from pyridoxamine 5'-phosphate: step 1/1. It functions in the pathway cofactor metabolism; pyridoxal 5'-phosphate salvage; pyridoxal 5'-phosphate from pyridoxine 5'-phosphate: step 1/1. Catalyzes the oxidation of either pyridoxine 5'-phosphate (PNP) or pyridoxamine 5'-phosphate (PMP) into pyridoxal 5'-phosphate (PLP). The protein is Pyridoxine/pyridoxamine 5'-phosphate oxidase of Roseobacter denitrificans (strain ATCC 33942 / OCh 114) (Erythrobacter sp. (strain OCh 114)).